The primary structure comprises 109 residues: uncharacterized protein (109 aa).

To A.fulgidus AF1885.

This is an uncharacterized protein from Methanocaldococcus jannaschii (strain ATCC 43067 / DSM 2661 / JAL-1 / JCM 10045 / NBRC 100440) (Methanococcus jannaschii).